The sequence spans 1152 residues: Nucleolar protein 6 (1152 aa).

Disordered regions lie at residues 1-30 and 36-55; these read MPSAGERPAVKMGPAPAGEQHRRATEDPEV and EGMDKEKAPSRKRARTEPPA. The residue at position 65 (S65) is a Phosphoserine. Residues 92-128 adopt a coiled-coil conformation; the sequence is LLRLQVEELLKEVRLSEKKKERIDNFLKEVTKRIQKV. Phosphoserine is present on residues S292 and S817.

Belongs to the NRAP family. As to quaternary structure, part of the small subunit (SSU) processome, composed of more than 70 proteins and the RNA chaperone small nucleolar RNA (snoRNA) U3. Interacts with RRP7A; required for NOL6 localization to nucleolus. Ubiquitously expressed.

Its subcellular location is the nucleus. It localises to the nucleolus. It is found in the chromosome. In terms of biological role, part of the small subunit (SSU) processome, first precursor of the small eukaryotic ribosomal subunit. During the assembly of the SSU processome in the nucleolus, many ribosome biogenesis factors, an RNA chaperone and ribosomal proteins associate with the nascent pre-rRNA and work in concert to generate RNA folding, modifications, rearrangements and cleavage as well as targeted degradation of pre-ribosomal RNA by the RNA exosome. This Mus musculus (Mouse) protein is Nucleolar protein 6 (Nol6).